The following is a 1425-amino-acid chain: Nephrocystin-4 (1425 aa).

Ser145 carries the post-translational modification Phosphoserine. The interval 448–554 (FSLSSDGPTE…VSHLEADLSQ (107 aa)) is disordered. Low complexity-rich tracts occupy residues 473–484 (PASPSGTPAPAA) and 507–530 (SPLS…SQSP). The tract at residues 822-1425 (LTLANVGHAC…ETFCVKVLYQ (604 aa)) is sufficient for basal bodies localization.

The protein belongs to the NPHP4 family. In terms of assembly, interacts with NPHP1 and RPGRIP1L/NPHP8; NPHP1, NPHP4 and RPGRIP1L are proposed to form a functional NPHP1-4-8 module localized to cell-cell contacts and the ciliary transition zone; NPHP4 mediates the interaction between NPHP1 and RPGRIP1L. Interacts with IQCB1/NPHP5; the interaction likely requires additional interactors. Interacts with RPGRIP1, CEP164, JADE1, PALS1, INADL, PARD6A, INVS, DVL2. Interacts with INTU; INTU mediates the interaction between NPHP4 and DAAM1. Interacts with JADE1. Interacts with SPATA7. Expressed in the retina (at protein level).

The protein resides in the cytoplasm. The protein localises to the cytoskeleton. Its subcellular location is the cilium basal body. It is found in the microtubule organizing center. It localises to the centrosome. The protein resides in the cell junction. The protein localises to the tight junction. Its function is as follows. Involved in the organization of apical junctions; the function is proposed to implicate a NPHP1-4-8 module. Does not seem to be strictly required for ciliogenesis. Required for building functional cilia. Involved in the organization of the subapical actin network in multiciliated epithelial cells. Seems to recruit INT to basal bodies of motile cilia which subsequently interacts with actin-modifying proteins such as DAAM1. In cooperation with INVS may down-regulate the canonical Wnt pathway and promote the Wnt-PCP pathway by regulating expression and subcellular location of disheveled proteins. Stabilizes protein levels of JADE1 and promotes its translocation to the nucleus leading to cooperative inhibition of canonical Wnt signaling. Acts as negative regulator of the hippo pathway by association with LATS1 and modifying LATS1-dependent phosphorylation and localization of WWTR1/TAZ. The protein is Nephrocystin-4 (Nphp4) of Mus musculus (Mouse).